Consider the following 776-residue polypeptide: Probable inorganic carbon transporter subunit DabA (776 aa).

Positions 313, 315, 473, and 488 each coordinate Zn(2+).

It belongs to the inorganic carbon transporter (TC 9.A.2) DabA family. Forms a complex with DabB. Zn(2+) serves as cofactor.

It is found in the cell inner membrane. In terms of biological role, part of an energy-coupled inorganic carbon pump. This Chromobacterium violaceum (strain ATCC 12472 / DSM 30191 / JCM 1249 / CCUG 213 / NBRC 12614 / NCIMB 9131 / NCTC 9757 / MK) protein is Probable inorganic carbon transporter subunit DabA.